The sequence spans 316 residues: Acetyl-coenzyme A carboxylase carboxyl transferase subunit alpha (316 aa).

The region spanning 39–293 is the CoA carboxyltransferase C-terminal domain; sequence KLEEKNAQLT…KKHLQANLTN (255 aa).

This sequence belongs to the AccA family. As to quaternary structure, acetyl-CoA carboxylase is a heterohexamer composed of biotin carboxyl carrier protein (AccB), biotin carboxylase (AccC) and two subunits each of ACCase subunit alpha (AccA) and ACCase subunit beta (AccD).

The protein resides in the cytoplasm. It catalyses the reaction N(6)-carboxybiotinyl-L-lysyl-[protein] + acetyl-CoA = N(6)-biotinyl-L-lysyl-[protein] + malonyl-CoA. The protein operates within lipid metabolism; malonyl-CoA biosynthesis; malonyl-CoA from acetyl-CoA: step 1/1. In terms of biological role, component of the acetyl coenzyme A carboxylase (ACC) complex. First, biotin carboxylase catalyzes the carboxylation of biotin on its carrier protein (BCCP) and then the CO(2) group is transferred by the carboxyltransferase to acetyl-CoA to form malonyl-CoA. The polypeptide is Acetyl-coenzyme A carboxylase carboxyl transferase subunit alpha (Coxiella burnetii (strain RSA 331 / Henzerling II)).